The sequence spans 286 residues: Structural protein p32K (286 aa).

Residues 1-12 (MYVTNNTALAGG) constitute a propeptide, removed in mature form. A disordered region spans residues 1-41 (MYVTNNTALAGGAYRKRKKKFQRPKPRKRARKSKKPPKSEN). The segment covering 14 to 36 (YRKRKKKFQRPKPRKRARKSKKP) has biased composition (basic residues).

This sequence belongs to the atadenoviridae p32K protein family.

It is found in the virion. The polypeptide is Structural protein p32K (Ovine adenovirus D serotype 7 (isolate OAV287) (OAdV-7)).